The primary structure comprises 81 residues: Antimicrobial peptide Con22 (81 aa).

An N-terminal signal peptide occupies residues 1 to 22 (MNAKVMLVCLLVTMLVMEPAEA). A propeptide spanning residues 66-81 (EAGQIPFDEFMNVLYS) is cleaved from the precursor.

It belongs to the non-disulfide-bridged peptide (NDBP) superfamily. Long chain multifunctional peptide (group 2) family. Expressed by the venom gland.

Its subcellular location is the secreted. It is found in the target cell membrane. Functionally, at high concentrations, acts as a pore former in cellular membranes and causes the leakage of the cells. At submicromolar concentrations, degranulates granulocytes and has a weak hemolytic activity against human erythrocytes. Also strongly inhibits the production of superoxide anions. Has a strong antibacterial activity against Gram-negative bacteria but is less active against Gram-positive bacteria. Also has antifungal activity. This chain is Antimicrobial peptide Con22, found in Urodacus yaschenkoi (Inland robust scorpion).